Reading from the N-terminus, the 1179-residue chain is DNA-directed RNA polymerase subunit beta (1179 aa).

The protein belongs to the RNA polymerase beta chain family. The RNAP catalytic core consists of 2 alpha, 1 beta, 1 beta' and 1 omega subunit. When a sigma factor is associated with the core the holoenzyme is formed, which can initiate transcription.

It carries out the reaction RNA(n) + a ribonucleoside 5'-triphosphate = RNA(n+1) + diphosphate. Its function is as follows. DNA-dependent RNA polymerase catalyzes the transcription of DNA into RNA using the four ribonucleoside triphosphates as substrates. The polypeptide is DNA-directed RNA polymerase subunit beta (Oceanobacillus iheyensis (strain DSM 14371 / CIP 107618 / JCM 11309 / KCTC 3954 / HTE831)).